Here is a 505-residue protein sequence, read N- to C-terminus: AMP phosphorylase (505 aa).

AMP contacts are provided by residues Gly-170, 196 to 201, and Thr-205; that span reads SRAITS. Residue Asp-258 is the Proton donor of the active site. AMP is bound by residues Ser-266 and Lys-290.

The protein belongs to the thymidine/pyrimidine-nucleoside phosphorylase family. Type 2 subfamily.

The catalysed reaction is AMP + phosphate = alpha-D-ribose 1,5-bisphosphate + adenine. It carries out the reaction CMP + phosphate = cytosine + alpha-D-ribose 1,5-bisphosphate. It catalyses the reaction UMP + phosphate = alpha-D-ribose 1,5-bisphosphate + uracil. Functionally, catalyzes the conversion of AMP and phosphate to adenine and ribose 1,5-bisphosphate (R15P). Exhibits phosphorylase activity toward CMP and UMP in addition to AMP. Functions in an archaeal AMP degradation pathway, together with R15P isomerase and RubisCO. This is AMP phosphorylase from Methanococcus maripaludis (strain C5 / ATCC BAA-1333).